A 156-amino-acid chain; its full sequence is RNA pyrophosphohydrolase (156 aa).

Positions 6–148 (NYRPNVAAIV…KKNIYVKVIK (143 aa)) constitute a Nudix hydrolase domain. The short motif at 43–64 (GGIDKGESAKNALFRELKEEIG) is the Nudix box element.

It belongs to the Nudix hydrolase family. RppH subfamily. A divalent metal cation is required as a cofactor.

Functionally, accelerates the degradation of transcripts by removing pyrophosphate from the 5'-end of triphosphorylated RNA, leading to a more labile monophosphorylated state that can stimulate subsequent ribonuclease cleavage. This chain is RNA pyrophosphohydrolase, found in Campylobacter jejuni subsp. doylei (strain ATCC BAA-1458 / RM4099 / 269.97).